The primary structure comprises 129 residues: Lysozyme C (129 aa).

Positions 1–129 constitute a C-type lysozyme domain; it reads KVYGRCELAA…VHAWIRGCRL (129 aa). Disulfide bonds link Cys-6/Cys-127, Cys-30/Cys-115, Cys-64/Cys-80, and Cys-76/Cys-94. Catalysis depends on residues Glu-35 and Asp-52.

This sequence belongs to the glycosyl hydrolase 22 family. In terms of assembly, monomer.

Its subcellular location is the secreted. The catalysed reaction is Hydrolysis of (1-&gt;4)-beta-linkages between N-acetylmuramic acid and N-acetyl-D-glucosamine residues in a peptidoglycan and between N-acetyl-D-glucosamine residues in chitodextrins.. Its function is as follows. Lysozymes have primarily a bacteriolytic function; those in tissues and body fluids are associated with the monocyte-macrophage system and enhance the activity of immunoagents. In Pavo cristatus (Indian peafowl), this protein is Lysozyme C (LYZ).